Reading from the N-terminus, the 650-residue chain is Chaperone protein DnaK (650 aa).

Threonine 200 is modified (phosphothreonine; by autocatalysis). Residues 611-634 (AQQAGAAGAAGAAAEGASAQGGAQ) show a composition bias toward low complexity. A disordered region spans residues 611 to 650 (AQQAGAAGAAGAAAEGASAQGGAQPPDDVVDADFKEVKKD).

Belongs to the heat shock protein 70 family.

Acts as a chaperone. This Burkholderia pseudomallei (strain 1710b) protein is Chaperone protein DnaK.